The primary structure comprises 270 residues: D-aminoacyl-tRNA deacylase (270 aa).

It belongs to the DtdA deacylase family. In terms of assembly, monomer. The cofactor is Zn(2+).

It carries out the reaction a D-aminoacyl-tRNA + H2O = a tRNA + a D-alpha-amino acid + H(+). The enzyme catalyses glycyl-tRNA(Ala) + H2O = tRNA(Ala) + glycine + H(+). In terms of biological role, D-aminoacyl-tRNA deacylase with broad substrate specificity. By recycling D-aminoacyl-tRNA to D-amino acids and free tRNA molecules, this enzyme counteracts the toxicity associated with the formation of D-aminoacyl-tRNA entities in vivo. The chain is D-aminoacyl-tRNA deacylase from Pyrococcus furiosus (strain ATCC 43587 / DSM 3638 / JCM 8422 / Vc1).